We begin with the raw amino-acid sequence, 353 residues long: Colistin resistance protein EmrA (353 aa).

The chain crosses the membrane as a helical span at residues 21-41; it reads WGVFSVLLLFLVAGILYYFFV. Residues 132–204 are a coiled coil; sequence VVAAQADLAR…QASRAQLLAD (73 aa).

This sequence belongs to the membrane fusion protein (MFP) (TC 8.A.1) family.

It localises to the cell inner membrane. Functionally, probably part of an efflux pump system that contributes to adaptation to osmotic stress and resistance to colistin. The protein is Colistin resistance protein EmrA of Acinetobacter baumannii (strain ATCC 17978 / DSM 105126 / CIP 53.77 / LMG 1025 / NCDC KC755 / 5377).